The primary structure comprises 1354 residues: Tensin homolog (1354 aa).

The Phosphatase tensin-type domain maps to 38–207 (MKDRKEGVQV…GYFSSLLSGR (170 aa)). The active-site Phosphocysteine intermediate is the C144. Positions 212–337 (SDPLYLHNII…VTVELVVSHT (126 aa)) constitute a C2 tensin-type domain. Disordered stretches follow at residues 380–442 (EYSE…DVVP), 597–616 (STLQ…RTLN), 638–660 (SNTA…SVQL), 692–720 (DVRG…NNTP), 734–754 (SVTT…EADA), 794–879 (AANN…DRQR), and 1015–1035 (NGER…HNGY). A compositionally biased stretch (polar residues) spans 391–401 (SSKSANPINNN). Residues 408-417 (VGPPVPPKPS) are compositionally biased toward pro residues. 3 stretches are compositionally biased toward polar residues: residues 704–720 (HNAS…NNTP), 734–747 (SVTT…STPS), and 794–804 (AANNDENQHNL). The span at 821 to 843 (AEFRREEERLRNTRSPYGEERWR) shows a compositional bias: basic and acidic residues. Over residues 1017–1033 (ERGGSGHAAGGGGGGHN) the composition is skewed to gly residues. The region spanning 1083–1187 (WYKPTISREQ…ALPTKLVLPD (105 aa)) is the SH2 domain. In terms of domain architecture, PTB spans 1209-1353 (ACNVVYVGSV…NKVMLAQKNR (145 aa)).

Belongs to the PTEN phosphatase protein family. In terms of assembly, may interact (via SH2 domain) with receptor svh-2 (when tyrosine-phosphorylated). May interact (via C-terminus) with integrin pat-3. In terms of tissue distribution, expressed in ventral motor neurons, including ventral and dorsal D-type neurons, and in a subset of cells in the head.

The protein resides in the cell projection. It is found in the axon. It catalyses the reaction O-phospho-L-tyrosyl-[protein] + H2O = L-tyrosyl-[protein] + phosphate. Probable phosphatase which regulates axon regeneration after injury by linking the svh-2 and integrin signaling pathways. Its function is as follows. Not involved in axon regeneration after injury. This Caenorhabditis elegans protein is Tensin homolog.